The chain runs to 61 residues: Large ribosomal subunit protein bL28 (61 aa).

The protein belongs to the bacterial ribosomal protein bL28 family.

In Geobacillus stearothermophilus (Bacillus stearothermophilus), this protein is Large ribosomal subunit protein bL28 (rpmB).